The chain runs to 91 residues: uncharacterized protein (91 aa).

This is an uncharacterized protein from Homo sapiens (Human).